Reading from the N-terminus, the 205-residue chain is Dr1-associated corepressor (205 aa).

In terms of domain architecture, Histone-fold spans 14–77 (PARIKKIMQT…SHLKQCIELE (64 aa)). The interval 91–205 (PDMQGDGEDN…DEEDEEDYDS (115 aa)) is disordered. The segment covering 98–108 (EDNHMDGDKGA) has biased composition (basic and acidic residues). A compositionally biased stretch (gly residues) spans 114–125 (PGSGGRKNGGMG). Residues 138–155 (SEQEDESEDTDTDGEEET) show a composition bias toward acidic residues. A compositionally biased stretch (pro residues) spans 184 to 193 (PLPPAPPGPS). Residues 195–205 (PDEEDEEDYDS) show a composition bias toward acidic residues.

Belongs to the NC2 alpha/DRAP1 family. Heterodimer with DR1. Binds BTAF1. Phosphorylation reduces DNA binding, but has no effect on heterodimerization and TBP binding. As to expression, ubiquitous. Highly expressed in adult testis, heart, skeletal muscle, pancreas and brain, and in fetal brain, liver and kidney.

It localises to the nucleus. In terms of biological role, the association of the DR1/DRAP1 heterodimer with TBP results in a functional repression of both activated and basal transcription of class II genes. This interaction precludes the formation of a transcription-competent complex by inhibiting the association of TFIIA and/or TFIIB with TBP. Can bind to DNA on its own. The chain is Dr1-associated corepressor (DRAP1) from Homo sapiens (Human).